A 274-amino-acid chain; its full sequence is Large ribosomal subunit protein uL2 (274 aa).

The disordered stretch occupies residues 223–265 (VVMNPVDHPHGGGEGRTSGGRHPVSPWGVPTKGYKTRSNKRTD).

It belongs to the universal ribosomal protein uL2 family. As to quaternary structure, part of the 50S ribosomal subunit. Forms a bridge to the 30S subunit in the 70S ribosome.

One of the primary rRNA binding proteins. Required for association of the 30S and 50S subunits to form the 70S ribosome, for tRNA binding and peptide bond formation. It has been suggested to have peptidyltransferase activity; this is somewhat controversial. Makes several contacts with the 16S rRNA in the 70S ribosome. The polypeptide is Large ribosomal subunit protein uL2 (Vibrio vulnificus (strain CMCP6)).